The chain runs to 76 residues: ATP synthase subunit c (76 aa).

The next 2 membrane-spanning stretches (helical) occupy residues 5-25 and 54-74; these read GIIA…GIGI and AALA…LVFL.

This sequence belongs to the ATPase C chain family. F-type ATPases have 2 components, F(1) - the catalytic core - and F(0) - the membrane proton channel. F(1) has five subunits: alpha(3), beta(3), gamma(1), delta(1), epsilon(1). F(0) has three main subunits: a(1), b(2) and c(10-14). The alpha and beta chains form an alternating ring which encloses part of the gamma chain. F(1) is attached to F(0) by a central stalk formed by the gamma and epsilon chains, while a peripheral stalk is formed by the delta and b chains.

It localises to the cell membrane. In terms of biological role, f(1)F(0) ATP synthase produces ATP from ADP in the presence of a proton or sodium gradient. F-type ATPases consist of two structural domains, F(1) containing the extramembraneous catalytic core and F(0) containing the membrane proton channel, linked together by a central stalk and a peripheral stalk. During catalysis, ATP synthesis in the catalytic domain of F(1) is coupled via a rotary mechanism of the central stalk subunits to proton translocation. Key component of the F(0) channel; it plays a direct role in translocation across the membrane. A homomeric c-ring of between 10-14 subunits forms the central stalk rotor element with the F(1) delta and epsilon subunits. The protein is ATP synthase subunit c of Ruminiclostridium cellulolyticum (strain ATCC 35319 / DSM 5812 / JCM 6584 / H10) (Clostridium cellulolyticum).